We begin with the raw amino-acid sequence, 1534 residues long: ABC transporter G family member 6 (1534 aa).

Positions Met1 to Ser11 are enriched in basic and acidic residues. The tract at residues Met1–Lys85 is disordered. Over residues Asn21 to Leu65 the composition is skewed to low complexity. The region spanning Val138–Ser385 is the ABC transporter 1 domain. Gly177–Ser184 is a binding site for ATP. The ABC transmembrane type-2 1 domain occupies Arg481 to Phe757. The next 7 helical transmembrane spans lie at Asn486–Trp506, Leu521–Phe541, Ile566–Trp586, Pro592–Leu612, Ile625–Phe645, Ile652–Leu672, and Val734–Leu754. A disordered region spans residues Lys781–Ser907. The segment covering Ile797–Glu808 has biased composition (acidic residues). Positions Ser830–Tyr841 are enriched in polar residues. The span at Asn842–Asn856 shows a compositional bias: low complexity. Over residues Thr864–Asn873 the composition is skewed to polar residues. The segment covering Ser874–Asn896 has biased composition (low complexity). Residues Glu897 to Gly906 are compositionally biased toward basic and acidic residues. One can recognise an ABC transporter 2 domain in the interval Val924–Gly1166. Residue Gly960–Ser967 participates in ATP binding. Positions Leu1256–Ile1529 constitute an ABC transmembrane type-2 2 domain. 6 helical membrane-spanning segments follow: residues Ile1261–Val1281, Leu1296–Val1316, Tyr1345–Leu1365, Cys1377–Val1397, Met1404–Ile1424, and Ile1506–Phe1526.

Belongs to the ABC transporter superfamily. ABCG family. PDR (TC 3.A.1.205) subfamily.

It is found in the membrane. The sequence is that of ABC transporter G family member 6 (abcG6) from Dictyostelium discoideum (Social amoeba).